The following is a 146-amino-acid chain: Large ribosomal subunit protein uL15 (146 aa).

The tract at residues 1-58 (MKLNELSPPKGARTARKRKGRGPGSGLGKTAGKGHKGQKARSGGGVRPGFEGGQMPVH) is disordered. Gly residues-rich tracts occupy residues 22-31 (GPGSGLGKTA) and 42-52 (SGGGVRPGFEG).

This sequence belongs to the universal ribosomal protein uL15 family. As to quaternary structure, part of the 50S ribosomal subunit.

In terms of biological role, binds to the 23S rRNA. This Desulfatibacillum aliphaticivorans protein is Large ribosomal subunit protein uL15.